Reading from the N-terminus, the 206-residue chain is Methyltransferase-like 26 (206 aa).

It belongs to the UPF0585 family.

The sequence is that of Methyltransferase-like 26 from Danio rerio (Zebrafish).